Here is a 206-residue protein sequence, read N- to C-terminus: Sperm acrosome developmental regulator (206 aa).

The segment at 180-206 is disordered; sequence RRHHVRCHAAPRPNPAQSLKLDAQSPL.

Expressed in sperm (at protein level).

It is found in the cytoplasmic vesicle. Its subcellular location is the secretory vesicle. It localises to the acrosome. May play a role in acrosome formation and nucleus shaping during spermiogenesis. This Homo sapiens (Human) protein is Sperm acrosome developmental regulator.